A 364-amino-acid polypeptide reads, in one-letter code: MRVGLLFGGRSGEHEVSISSARAIASALSAGENASKYEILPFYIHKDGRWLAGEAPQQVLKSGAPLLESSNSSPAENNLVNSQQQTLERWQSPSQVAEVDVWFPILHGPNGEDGTIQGLLTLMQTPFVGSGVLGSALGMDKIAMKMAFEQAGLPQVKYKAVTRAQIWSNPCVFPKLCDEIEASLGYPCFVKPANLGSSVGISKVRSRQELEDALDNAANYDRRIIIEAGVAAREVECAVLGNDQPQASTVGEITFNSDFYDYETKYTAGKADLLIPAIIPDDISRQIQNMALQAFAAVDAAGLARVDFFYVEATGEVLINEINTLPGFTATSMYPQLWAHSGIPFPELVDKLVQLAIERHNPSH.

In terms of domain architecture, ATP-grasp spans 145 to 354 (KMAFEQAGLP…FPELVDKLVQ (210 aa)). 181–236 (EASLGYPCFVKPANLGSSVGISKVRSRQELEDALDNAANYDRRIIIEAGVAAREVE) provides a ligand contact to ATP. Residues Asp307, Glu321, and Asn323 each contribute to the Mg(2+) site.

It belongs to the D-alanine--D-alanine ligase family. Requires Mg(2+) as cofactor. The cofactor is Mn(2+).

The protein resides in the cytoplasm. The enzyme catalyses 2 D-alanine + ATP = D-alanyl-D-alanine + ADP + phosphate + H(+). It participates in cell wall biogenesis; peptidoglycan biosynthesis. In terms of biological role, cell wall formation. In Nostoc sp. (strain PCC 7120 / SAG 25.82 / UTEX 2576), this protein is D-alanine--D-alanine ligase.